The primary structure comprises 117 residues: Large ribosomal subunit protein uL18 (117 aa).

Belongs to the universal ribosomal protein uL18 family. In terms of assembly, part of the 50S ribosomal subunit; part of the 5S rRNA/L5/L18/L25 subcomplex. Contacts the 5S and 23S rRNAs.

This is one of the proteins that bind and probably mediate the attachment of the 5S RNA into the large ribosomal subunit, where it forms part of the central protuberance. The chain is Large ribosomal subunit protein uL18 from Acidithiobacillus ferrooxidans (strain ATCC 23270 / DSM 14882 / CIP 104768 / NCIMB 8455) (Ferrobacillus ferrooxidans (strain ATCC 23270)).